Consider the following 248-residue polypeptide: PF03932 family protein CutC (248 aa).

This sequence belongs to the CutC family. Homodimer.

Its subcellular location is the cytoplasm. This is PF03932 family protein CutC from Escherichia coli O45:K1 (strain S88 / ExPEC).